Consider the following 152-residue polypeptide: UPF0266 membrane protein ESA_01432 (152 aa).

The next 3 helical transmembrane spans lie at 1–21 (MTLT…WAIY), 45–65 (ADSL…VASH), and 67–87 (ALLT…LFWI).

The protein belongs to the UPF0266 family.

Its subcellular location is the cell inner membrane. In Cronobacter sakazakii (strain ATCC BAA-894) (Enterobacter sakazakii), this protein is UPF0266 membrane protein ESA_01432.